The sequence spans 440 residues: Protein OSB3, chloroplastic/mitochondrial (440 aa).

The transit peptide at 1 to 61 (MNLISRTLTR…AKVSVKPPLN (61 aa)) directs the protein to the chloroplast and mitochondrion. The region spanning 80–178 (ISNWINLIGF…VMVQNLNFVQ (99 aa)) is the SSB domain. 3 PDF region regions span residues 218–270 (WKHL…LKLE), 294–342 (WKDL…SKLP), and 380–428 (WKNL…SKLP).

Expressed primarily in the female gametophyte and in the floral abscission zone.

The protein localises to the mitochondrion. Its subcellular location is the plastid. It is found in the chloroplast. Binds single-stranded DNA. In Arabidopsis thaliana (Mouse-ear cress), this protein is Protein OSB3, chloroplastic/mitochondrial (OSB3).